Reading from the N-terminus, the 262-residue chain is Spindlin-1 (262 aa).

The segment at 1-51 (MKTPFGKTPGQRSRADAGHAGVSANMMKKRTSHKKHRSSVGPSKPVSQPRR) is disordered. Glycyl lysine isopeptide (Lys-Gly) (interchain with G-Cter in SUMO2) cross-links involve residues Lys7 and Lys28. The span at 27–38 (MKKRTSHKKHRS) shows a compositional bias: basic residues. Lys44 is subject to N6-acetyllysine; alternate. Lys44 is covalently cross-linked (Glycyl lysine isopeptide (Lys-Gly) (interchain with G-Cter in SUMO2); alternate). Residues 53-116 (IVGCRIQHGW…RVSALEVLPD (64 aa)) form a tudor-like domain 1 region. The segment at 93-98 (GFDCVY) is histone H3K4me3 and H3R8me2a binding. 2 positions are modified to phosphoserine; by AURKA: Ser109 and Ser124. The tudor-like domain 2 stretch occupies residues 132 to 193 (MIGKAVEHMF…DYKEGDLRIM (62 aa)). Glu142 is a region of interest (histone H3K4me3 and H3R8me2a binding). A Phosphoserine modification is found at Ser199. The tudor-like domain 3 stretch occupies residues 213-262 (LVGKQVEYAKEDGSKRTGMVIHQVEAKPSVYFIKFDDDFHIYVYDLVKTS). The tract at residues 250-252 (DFH) is histone H3K4me3 and H3R8me2a binding.

Belongs to the SPIN/STSY family. As to quaternary structure, homodimer; may form higher-order oligomers. Interacts with TCF7L2/TCF4; the interaction is direct. Interacts with HABP4 and SERBP1. Interacts with SPINDOC; SPINDOC stabilizes SPIN1 and enhances its association with bivalent H3K4me3K9me3 mark. Interacts with SPOCD1; promoting recruitment of PIWIL4 and SPOCD1 to transposons. Phosphorylated during oocyte meiotic maturation. Highly expressed in ovarian cancer tissues.

It localises to the nucleus. Its subcellular location is the nucleolus. Its function is as follows. Chromatin reader that specifically recognizes and binds histone H3 both trimethylated at 'Lys-4' and 'Lys-9' (H3K4me3K9me3) and is involved in piRNA-mediated retrotransposon silencing during spermatogenesis. Plays a key role in the initiation of the PIWIL4-piRNA pathway, a pathway that directs transposon DNA methylation and silencing in the male embryonic germ cells, by promoting recruitment of DNA methylation machinery to transposons: binds young, but not old, LINE1 transposons, which are specifically marked with H3K4me3K9me3, and promotes the recruitment of PIWIL4 and SPOCD1 to transposons, leading to piRNA-directed DNA methylation. Also recognizes and binds histone H3 both trimethylated at 'Lys-4' and asymmetrically dimethylated at 'Arg-8' (H3K4me3 and H3R8me2a) and acts as an activator of Wnt signaling pathway downstream of PRMT2. In case of cancer, promotes cell cancer proliferation via activation of the Wnt signaling pathway. Overexpression induces metaphase arrest and chromosomal instability. Localizes to active rDNA loci and promotes the expression of rRNA genes. May play a role in cell-cycle regulation during the transition from gamete to embryo. Involved in oocyte meiotic resumption, a process that takes place before ovulation to resume meiosis of oocytes blocked in prophase I: may act by regulating maternal transcripts to control meiotic resumption. The polypeptide is Spindlin-1 (Homo sapiens (Human)).